The primary structure comprises 219 residues: Probable transaldolase (219 aa).

The active-site Schiff-base intermediate with substrate is Lys-83.

Belongs to the transaldolase family. Type 3B subfamily.

It is found in the cytoplasm. It catalyses the reaction D-sedoheptulose 7-phosphate + D-glyceraldehyde 3-phosphate = D-erythrose 4-phosphate + beta-D-fructose 6-phosphate. It participates in carbohydrate degradation; pentose phosphate pathway; D-glyceraldehyde 3-phosphate and beta-D-fructose 6-phosphate from D-ribose 5-phosphate and D-xylulose 5-phosphate (non-oxidative stage): step 2/3. Functionally, transaldolase is important for the balance of metabolites in the pentose-phosphate pathway. This chain is Probable transaldolase, found in Cereibacter sphaeroides (strain ATCC 17025 / ATH 2.4.3) (Rhodobacter sphaeroides).